Consider the following 292-residue polypeptide: Selenate reductase subunit B (292 aa).

A signal peptide (tat-type signal) is located at residues M1–A43. 3 consecutive 4Fe-4S ferredoxin-type domains span residues W84 to V113, V129 to D160, and G161 to G190. [4Fe-4S] cluster contacts are provided by C93, C96, C99, C103, C138, C141, C146, C150, C170, C173, C176, C180, C230, C233, C245, and C249.

As to quaternary structure, the complex is composed of three subunits: SrdA, SrdB and SrdC. The cofactor is [4Fe-4S] cluster. Post-translationally, predicted to be exported by the Tat system. The position of the signal peptide cleavage has not been experimentally proven.

It is found in the secreted. It catalyses the reaction selenite + a quinone + H2O = selenate + a quinol. In terms of biological role, component of the respiratory selenate reductase complex, which catalyzes the reduction of selenate to selenite. This subunit probably transfers electrons from SrdC to SrdA. This chain is Selenate reductase subunit B, found in Mesobacillus selenatarsenatis (strain DSM 18680 / JCM 14380 / FERM P-15431 / SF-1).